Reading from the N-terminus, the 183-residue chain is Oligoribonuclease (183 aa).

Residues 8–171 (LIWLDLEMTG…QDIRDSIEEL (164 aa)) form the Exonuclease domain. The active site involves Tyr129.

Belongs to the oligoribonuclease family.

The protein localises to the cytoplasm. Functionally, 3'-to-5' exoribonuclease specific for small oligoribonucleotides. The polypeptide is Oligoribonuclease (Coxiella burnetii (strain RSA 493 / Nine Mile phase I)).